Consider the following 204-residue polypeptide: Holliday junction branch migration complex subunit RuvA (204 aa).

The interval Met-1 to Leu-63 is domain I. Residues Thr-64–Asp-142 form a domain II region. The tract at residues Ser-143 to Thr-153 is flexible linker. The segment at Thr-153–Ser-204 is domain III.

Belongs to the RuvA family. As to quaternary structure, homotetramer. Forms an RuvA(8)-RuvB(12)-Holliday junction (HJ) complex. HJ DNA is sandwiched between 2 RuvA tetramers; dsDNA enters through RuvA and exits via RuvB. An RuvB hexamer assembles on each DNA strand where it exits the tetramer. Each RuvB hexamer is contacted by two RuvA subunits (via domain III) on 2 adjacent RuvB subunits; this complex drives branch migration. In the full resolvosome a probable DNA-RuvA(4)-RuvB(12)-RuvC(2) complex forms which resolves the HJ.

The protein resides in the cytoplasm. Its function is as follows. The RuvA-RuvB-RuvC complex processes Holliday junction (HJ) DNA during genetic recombination and DNA repair, while the RuvA-RuvB complex plays an important role in the rescue of blocked DNA replication forks via replication fork reversal (RFR). RuvA specifically binds to HJ cruciform DNA, conferring on it an open structure. The RuvB hexamer acts as an ATP-dependent pump, pulling dsDNA into and through the RuvAB complex. HJ branch migration allows RuvC to scan DNA until it finds its consensus sequence, where it cleaves and resolves the cruciform DNA. This is Holliday junction branch migration complex subunit RuvA from Rickettsia canadensis (strain McKiel).